The sequence spans 114 residues: Large ribosomal subunit protein bL19 (114 aa).

This sequence belongs to the bacterial ribosomal protein bL19 family.

In terms of biological role, this protein is located at the 30S-50S ribosomal subunit interface and may play a role in the structure and function of the aminoacyl-tRNA binding site. The chain is Large ribosomal subunit protein bL19 from Lysinibacillus sphaericus (strain C3-41).